Here is a 63-residue protein sequence, read N- to C-terminus: Large ribosomal subunit protein bL32 (63 aa).

The interval 1 to 27 (MANPKAKMSKSRRDKRRAQFNARTKPA) is disordered. Over residues 7 to 18 (KMSKSRRDKRRA) the composition is skewed to basic residues.

It belongs to the bacterial ribosomal protein bL32 family.

The protein is Large ribosomal subunit protein bL32 of Pelodictyon phaeoclathratiforme (strain DSM 5477 / BU-1).